The chain runs to 521 residues: Bifunctional purine biosynthesis protein PurH (521 aa).

The 145-residue stretch at 1 to 145 (MIKQALISVS…KNHRDVTVVV (145 aa)) folds into the MGS-like domain.

This sequence belongs to the PurH family.

It carries out the reaction (6R)-10-formyltetrahydrofolate + 5-amino-1-(5-phospho-beta-D-ribosyl)imidazole-4-carboxamide = 5-formamido-1-(5-phospho-D-ribosyl)imidazole-4-carboxamide + (6S)-5,6,7,8-tetrahydrofolate. It catalyses the reaction IMP + H2O = 5-formamido-1-(5-phospho-D-ribosyl)imidazole-4-carboxamide. It participates in purine metabolism; IMP biosynthesis via de novo pathway; 5-formamido-1-(5-phospho-D-ribosyl)imidazole-4-carboxamide from 5-amino-1-(5-phospho-D-ribosyl)imidazole-4-carboxamide (10-formyl THF route): step 1/1. The protein operates within purine metabolism; IMP biosynthesis via de novo pathway; IMP from 5-formamido-1-(5-phospho-D-ribosyl)imidazole-4-carboxamide: step 1/1. The chain is Bifunctional purine biosynthesis protein PurH from Burkholderia vietnamiensis (strain G4 / LMG 22486) (Burkholderia cepacia (strain R1808)).